We begin with the raw amino-acid sequence, 113 residues long: Large ribosomal subunit protein bL17 (113 aa).

Belongs to the bacterial ribosomal protein bL17 family. In terms of assembly, part of the 50S ribosomal subunit. Contacts protein L32.

This Clostridioides difficile (strain 630) (Peptoclostridium difficile) protein is Large ribosomal subunit protein bL17.